Here is a 292-residue protein sequence, read N- to C-terminus: Elongation factor Ts (292 aa).

Positions T79–V82 are involved in Mg(2+) ion dislocation from EF-Tu.

Belongs to the EF-Ts family.

It is found in the cytoplasm. Associates with the EF-Tu.GDP complex and induces the exchange of GDP to GTP. It remains bound to the aminoacyl-tRNA.EF-Tu.GTP complex up to the GTP hydrolysis stage on the ribosome. The chain is Elongation factor Ts from Xanthomonas campestris pv. campestris (strain B100).